A 407-amino-acid chain; its full sequence is Tryptophan synthase beta chain (407 aa).

Lys86 is subject to N6-(pyridoxal phosphate)lysine.

This sequence belongs to the TrpB family. In terms of assembly, tetramer of two alpha and two beta chains. Pyridoxal 5'-phosphate serves as cofactor.

The catalysed reaction is (1S,2R)-1-C-(indol-3-yl)glycerol 3-phosphate + L-serine = D-glyceraldehyde 3-phosphate + L-tryptophan + H2O. It functions in the pathway amino-acid biosynthesis; L-tryptophan biosynthesis; L-tryptophan from chorismate: step 5/5. In terms of biological role, the beta subunit is responsible for the synthesis of L-tryptophan from indole and L-serine. This chain is Tryptophan synthase beta chain, found in Shewanella woodyi (strain ATCC 51908 / MS32).